Consider the following 248-residue polypeptide: PF03932 family protein CutC (248 aa).

It belongs to the CutC family.

The protein localises to the cytoplasm. In Photorhabdus laumondii subsp. laumondii (strain DSM 15139 / CIP 105565 / TT01) (Photorhabdus luminescens subsp. laumondii), this protein is PF03932 family protein CutC.